The following is a 150-amino-acid chain: Ribonuclease H (150 aa).

In terms of domain architecture, RNase H type-1 spans 3–144 (GEDIVEIYTD…ADALARQGMA (142 aa)). Residues Asp-12, Glu-50, Asp-72, and Asp-136 each contribute to the Mg(2+) site.

This sequence belongs to the RNase H family. In terms of assembly, monomer. Mg(2+) serves as cofactor.

Its subcellular location is the cytoplasm. The catalysed reaction is Endonucleolytic cleavage to 5'-phosphomonoester.. Functionally, endonuclease that specifically degrades the RNA of RNA-DNA hybrids. The chain is Ribonuclease H from Parvibaculum lavamentivorans (strain DS-1 / DSM 13023 / NCIMB 13966).